Consider the following 626-residue polypeptide: Dynein, cytoplasmic 1, intermediate chain 2a (626 aa).

Residues 20-43 show a composition bias toward basic and acidic residues; the sequence is QIREEKKRKEEERKKKEAELKKDA. Disordered regions lie at residues 20–108 and 142–197; these read QIRE…RTLH and KEVV…HELT. The segment covering 82–99 has biased composition (polar residues); the sequence is TAKSVGSPSEAGSQDSGD. Acidic residues predominate over residues 160 to 169; it reads KDEEDEEEET. The span at 177 to 197 shows a compositional bias: basic and acidic residues; the sequence is ETEKEKPEEKQVEEALPHELT. WD repeat units follow at residues 265 to 314, 318 to 358, 367 to 408, 417 to 457, 462 to 507, 510 to 550, and 556 to 595; these read SKQR…ATPE, HCQS…RTPV, AHTH…QPQD, SKSV…AGIS, GHHG…PLYS, DNSD…EVPT, and DGSP…AVPR.

It belongs to the dynein intermediate chain family. Homodimer. The cytoplasmic dynein 1 complex consists of two catalytic heavy chains (HCs) and a number of non-catalytic subunits presented by intermediate chains (ICs), light intermediate chains (LICs) and light chains (LCs); the composition seems to vary in respect to the IC, LIC and LC composition. The heavy chain homodimer serves as a scaffold for the probable homodimeric assembly of the respective non-catalytic subunits. The ICs and LICs bind directly to the HC dimer and the LCs assemble on the IC dimer.

The protein localises to the cytoplasm. Its subcellular location is the cytoskeleton. Acts as one of several non-catalytic accessory components of the cytoplasmic dynein 1 complex that are thought to be involved in linking dynein to cargos and to adapter proteins that regulate dynein function. Cytoplasmic dynein 1 acts as a motor for the intracellular retrograde motility of vesicles and organelles along microtubules. Plays a role in the development of anterior brain and cartilaginous structures. The chain is Dynein, cytoplasmic 1, intermediate chain 2a (dync1i2a) from Danio rerio (Zebrafish).